Reading from the N-terminus, the 452-residue chain is Probable ECA polymerase (452 aa).

11 helical membrane passes run 6 to 26, 37 to 57, 63 to 83, 118 to 138, 155 to 175, 181 to 201, 207 to 227, 228 to 248, 341 to 361, 378 to 398, and 410 to 430; these read FSGL…LTWF, VFFS…TSVL, VGVA…CFYG, VILM…NGFL, GVAL…VYFL, AWLF…MIVG, IIIA…ISLW, MLAA…LKRY, LVVM…GLII, YKAA…IVLV, and VFFL…FWLF.

It belongs to the WzyE family. As to quaternary structure, probably part of a complex composed of WzxE, WzyE and WzzE.

Its subcellular location is the cell inner membrane. Its pathway is bacterial outer membrane biogenesis; enterobacterial common antigen biosynthesis. Its function is as follows. Probably involved in the polymerization of enterobacterial common antigen (ECA) trisaccharide repeat units. The polypeptide is Probable ECA polymerase (Salmonella gallinarum (strain 287/91 / NCTC 13346)).